Reading from the N-terminus, the 107-residue chain is Phosphoribosyl-ATP pyrophosphatase (107 aa).

The protein belongs to the PRA-PH family.

It is found in the cytoplasm. The catalysed reaction is 1-(5-phospho-beta-D-ribosyl)-ATP + H2O = 1-(5-phospho-beta-D-ribosyl)-5'-AMP + diphosphate + H(+). It functions in the pathway amino-acid biosynthesis; L-histidine biosynthesis; L-histidine from 5-phospho-alpha-D-ribose 1-diphosphate: step 2/9. This is Phosphoribosyl-ATP pyrophosphatase from Nitrobacter hamburgensis (strain DSM 10229 / NCIMB 13809 / X14).